The primary structure comprises 101 residues: Large ribosomal subunit protein uL23 (101 aa).

Belongs to the universal ribosomal protein uL23 family. As to quaternary structure, part of the 50S ribosomal subunit. Contacts protein L29, and trigger factor when it is bound to the ribosome.

One of the early assembly proteins it binds 23S rRNA. One of the proteins that surrounds the polypeptide exit tunnel on the outside of the ribosome. Forms the main docking site for trigger factor binding to the ribosome. This chain is Large ribosomal subunit protein uL23, found in Paenarthrobacter aurescens (strain TC1).